Here is a 189-residue protein sequence, read N- to C-terminus: Interferon alpha-12 (189 aa).

Residues 1-23 (MARLCAFLMTLLVMSYWSTCSLG) form the signal peptide. Disulfide bonds link C24–C122 and C52–C162. An N-linked (GlcNAc...) asparagine glycan is attached at N101.

This sequence belongs to the alpha/beta interferon family.

It localises to the secreted. In terms of biological role, produced by macrophages, IFN-alpha have antiviral activities. Interferon stimulates the production of two enzymes: a protein kinase and an oligoadenylate synthetase. The protein is Interferon alpha-12 (Ifna12) of Mus musculus (Mouse).